The sequence spans 508 residues: MHMSKSFLLISMGLASISVHAQTLTRDNGAPVGDNQNSITAGENGSVLLQDVHLIQKLQRFARERIPERVVHARGTGAHGEFVVSGDFSDLTLSSPFAQSGKVTPVFVRFSTVIHSKGSPETLRDPRGFATKFYTDQGNWDLVGNNLPVFFIRDSIKFPDMVHSLKPSPVTNLQDPNRFFDFFSSQPSATNMLTWVYTNLGTPASYRTMDGFGVHAYKWINRKGEVNYVKFHWKSQQGVKSLRPAEVTKVQGEDFNHLTNDLYTQINAGNFPKWDLYVKVLSPKALSKLDYNGLDATKVWLDVPEKKVGTMTLNRVPDNFFLETEQSAFAPSNIIPGIEPSEDRLLQGRLFAYADTQLYRLGANLFQLPVNSPKSPVANHNQDGPSNNSTGLGNVDSLDVNYEPSRLVNLTVDKQARAVETPLSGHVQQQAIRNPRDFFQAGVLYRSLSEQDKADLIHNLSGDLNKVNDAEVKAIMVSYFYRADKEYGTRLAKATDVNLKQVTKLASM.

The N-terminal stretch at 1 to 21 (MHMSKSFLLISMGLASISVHA) is a signal peptide. Active-site residues include histidine 72 and asparagine 145. A heme-binding site is contributed by tyrosine 353. Residues 373–392 (PKSPVANHNQDGPSNNSTGL) are compositionally biased toward polar residues. A disordered region spans residues 373–396 (PKSPVANHNQDGPSNNSTGLGNVD).

It belongs to the catalase family. It depends on heme as a cofactor.

It localises to the periplasm. The enzyme catalyses 2 H2O2 = O2 + 2 H2O. Its function is as follows. Decomposes hydrogen peroxide into water and oxygen; serves to protect cells from the toxic effects of hydrogen peroxide. The chain is Catalase from Vibrio vulnificus (strain CMCP6).